The sequence spans 551 residues: Periplasmic [NiFe] hydrogenase large subunit (551 aa).

Ni(2+) is bound by residues C65, C68, C530, and C533. Residues 537 to 551 (VIDPESNQVHKFRIL) constitute a propeptide that is removed on maturation.

It belongs to the [NiFe]/[NiFeSe] hydrogenase large subunit family. Heterodimer of a large and a small subunit. Requires Ni(2+) as cofactor.

It is found in the periplasm. The enzyme catalyses 2 Fe(III)-[cytochrome c3] + H2 = 2 Fe(II)-[cytochrome c3] + 2 H(+). The protein is Periplasmic [NiFe] hydrogenase large subunit (hydB) of Megalodesulfovibrio gigas (Desulfovibrio gigas).